The primary structure comprises 277 residues: Large ribosomal subunit protein uL2 (277 aa).

2 disordered regions span residues 37–60 (KNST…GHKH) and 223–264 (VVMN…NKRT). Residues 39 to 49 (STAGRNNNGHI) show a composition bias toward polar residues. Residues 50–60 (TTRHKGGGHKH) are compositionally biased toward basic residues. Residues 229-244 (DHPHGGGEGRTGEARE) are compositionally biased toward basic and acidic residues.

The protein belongs to the universal ribosomal protein uL2 family. In terms of assembly, part of the 50S ribosomal subunit. Forms a bridge to the 30S subunit in the 70S ribosome.

In terms of biological role, one of the primary rRNA binding proteins. Required for association of the 30S and 50S subunits to form the 70S ribosome, for tRNA binding and peptide bond formation. It has been suggested to have peptidyltransferase activity; this is somewhat controversial. Makes several contacts with the 16S rRNA in the 70S ribosome. This is Large ribosomal subunit protein uL2 from Neisseria gonorrhoeae (strain ATCC 700825 / FA 1090).